Here is a 61-residue protein sequence, read N- to C-terminus: Large ribosomal subunit protein uL30 (61 aa).

This sequence belongs to the universal ribosomal protein uL30 family. In terms of assembly, part of the 50S ribosomal subunit.

This is Large ribosomal subunit protein uL30 from Chlorobium luteolum (strain DSM 273 / BCRC 81028 / 2530) (Pelodictyon luteolum).